A 113-amino-acid polypeptide reads, in one-letter code: Putative pterin-4-alpha-carbinolamine dehydratase (113 aa).

The protein belongs to the pterin-4-alpha-carbinolamine dehydratase family.

It carries out the reaction (4aS,6R)-4a-hydroxy-L-erythro-5,6,7,8-tetrahydrobiopterin = (6R)-L-erythro-6,7-dihydrobiopterin + H2O. The sequence is that of Putative pterin-4-alpha-carbinolamine dehydratase from Idiomarina loihiensis (strain ATCC BAA-735 / DSM 15497 / L2-TR).